Reading from the N-terminus, the 160-residue chain is Cyclic pyranopterin monophosphate synthase (160 aa).

Residues 75 to 77 (LCH) and 113 to 114 (ME) contribute to the substrate site. Aspartate 128 is a catalytic residue.

It belongs to the MoaC family. In terms of assembly, homohexamer; trimer of dimers.

It carries out the reaction (8S)-3',8-cyclo-7,8-dihydroguanosine 5'-triphosphate = cyclic pyranopterin phosphate + diphosphate. It participates in cofactor biosynthesis; molybdopterin biosynthesis. Functionally, catalyzes the conversion of (8S)-3',8-cyclo-7,8-dihydroguanosine 5'-triphosphate to cyclic pyranopterin monophosphate (cPMP). This Beijerinckia indica subsp. indica (strain ATCC 9039 / DSM 1715 / NCIMB 8712) protein is Cyclic pyranopterin monophosphate synthase.